A 452-amino-acid chain; its full sequence is Isocitrate dehydrogenase [NADP], mitochondrial (452 aa).

Residues 1–39 (MAGYLRVVRSLCRASGSGSAWAPAALTAPNLQEQPRRHY) constitute a mitochondrion transit peptide. 4 positions are modified to N6-acetyllysine: Lys-45, Lys-48, Lys-67, and Lys-69. Lys-80 and Lys-106 each carry N6-acetyllysine; alternate. N6-succinyllysine; alternate is present on residues Lys-80 and Lys-106. NADP(+) contacts are provided by residues 115-117 (TIT) and Arg-122. Residue Thr-117 coordinates D-threo-isocitrate. D-threo-isocitrate contacts are provided by residues 134-140 (SPNGTIR) and Arg-149. Lys-155 carries the post-translational modification N6-acetyllysine. An N6-acetyllysine; alternate modification is found at Lys-166. Residue Lys-166 is modified to N6-succinyllysine; alternate. Arg-172 is a binding site for D-threo-isocitrate. Residues Lys-180 and Lys-193 each carry the N6-acetyllysine; alternate modification. An N6-succinyllysine; alternate mark is found at Lys-180 and Lys-193. Lys-199 is subject to N6-acetyllysine. At Lys-256 the chain carries N6-acetyllysine; alternate. Lys-256 bears the N6-succinyllysine; alternate mark. 4 positions are modified to N6-acetyllysine: Lys-263, Lys-272, Lys-275, and Lys-280. Lys-282 is subject to N6-acetyllysine; alternate. N6-succinyllysine; alternate is present on Lys-282. Asp-291 is a Mn(2+) binding site. NADP(+) is bound at residue Lys-299. Asp-314 provides a ligand contact to Mn(2+). NADP(+) is bound by residues 349–354 (GTVTRH) and Asn-367. Residue Lys-384 is modified to N6-acetyllysine; alternate. Position 384 is an N6-succinyllysine; alternate (Lys-384). An N6-acetyllysine mark is found at Lys-400, Lys-413, and Lys-442.

Belongs to the isocitrate and isopropylmalate dehydrogenases family. Homodimer. Mg(2+) is required as a cofactor. Mn(2+) serves as cofactor. Acetylation at Lys-413 dramatically reduces catalytic activity. Deacetylated by SIRT3.

It localises to the mitochondrion. It carries out the reaction D-threo-isocitrate + NADP(+) = 2-oxoglutarate + CO2 + NADPH. In terms of biological role, plays a role in intermediary metabolism and energy production. It may tightly associate or interact with the pyruvate dehydrogenase complex. The protein is Isocitrate dehydrogenase [NADP], mitochondrial (IDH2) of Bos taurus (Bovine).